Reading from the N-terminus, the 808-residue chain is Transducin beta-like protein 3 (808 aa).

Ala-2 is modified (N-acetylalanine). WD repeat units follow at residues 64–105 (EDQE…RLWK), 107–146 (IHTA…GTHH), 149–190 (GSPG…CLAV), 193–232 (AHYS…ATRT), 245–284 (LPEE…CVYT), 290–329 (GPGQ…LQKQ), 332–372 (GYSE…CQIL), 374–413 (GHTD…QVMC), 419–459 (GHTH…LSKN), 477–516 (CHDK…LLGV), 519–560 (GHRR…KTFE), 562–602 (HDAS…RTLD), and 604–642 (HEDK…EQAE). Ser-257 is subject to Phosphoserine. A Glycyl lysine isopeptide (Lys-Gly) (interchain with G-Cter in SUMO2) cross-link involves residue Lys-407.

Part of the small subunit (SSU) processome, composed of more than 70 proteins and the RNA chaperone small nucleolar RNA (snoRNA) U3.

It localises to the nucleus. It is found in the nucleolus. In terms of biological role, part of the small subunit (SSU) processome, first precursor of the small eukaryotic ribosomal subunit. During the assembly of the SSU processome in the nucleolus, many ribosome biogenesis factors, an RNA chaperone and ribosomal proteins associate with the nascent pre-rRNA and work in concert to generate RNA folding, modifications, rearrangements and cleavage as well as targeted degradation of pre-ribosomal RNA by the RNA exosome. This chain is Transducin beta-like protein 3, found in Homo sapiens (Human).